The sequence spans 306 residues: Cell division protein ZipA (306 aa).

The Periplasmic portion of the chain corresponds to 1–6; that stretch reads MENLQL. A helical transmembrane segment spans residues 7–27; it reads VLLLIGAIAIIAVLVHGFWSI. Topologically, residues 28–306 are cytoplasmic; that stretch reads RKQQPKGYKQ…NYIQRIRAQA (279 aa).

It belongs to the ZipA family. Interacts with FtsZ via their C-terminal domains.

The protein resides in the cell inner membrane. In terms of biological role, essential cell division protein that stabilizes the FtsZ protofilaments by cross-linking them and that serves as a cytoplasmic membrane anchor for the Z ring. Also required for the recruitment to the septal ring of downstream cell division proteins. The polypeptide is Cell division protein ZipA (Shewanella halifaxensis (strain HAW-EB4)).